The chain runs to 608 residues: ESX-3 secretion system protein EccA3 (608 aa).

The interval 284–303 (EARSDPWDPETEPSEAEFVD) is disordered. The span at 290–301 (WDPETEPSEAEF) shows a compositional bias: acidic residues. ATP is bound at residue 365–372 (GPPGTGKT).

It belongs to the CbxX/CfxQ family. Part of the ESX-3 / type VII secretion system (T7SS), which is composed of cytosolic and membrane components.

Its subcellular location is the cytoplasm. Part of the ESX-3 specialized secretion system, which is required for siderophore-mediated iron acquisition and for the secretion of EsxH and EsxG. EccA3 exhibits ATPase activity and may provide energy for the export of ESX-3 substrates. This chain is ESX-3 secretion system protein EccA3, found in Mycolicibacterium smegmatis (strain ATCC 700084 / mc(2)155) (Mycobacterium smegmatis).